A 464-amino-acid chain; its full sequence is MRFLSKRILKPVLSVIILISIAVTVVLYFLTANENYLQAVKDSAKSQYASLRESYKSITGKTESADELPDHDAEVLDSIMDRLHEPLYEKDTFDPNEVLAENKQLYEEFLLQEISEPKVDNLVRSGDPLAGKAKGTILSLVRNSDLEDIISSIQQLEEEYNKNFGYPYTFLNDEEFTDEFKDGIKSILPKDRVVEFGTIGPDNWNMPDSIDRERYDQEMDKMSKENIQYAEVESYHNMCRFYSKEFYHHPLLSKYKYVWRLEPNVNFYCKINYDVFQFMNKNDKIYGFVLNLYDSPQTIETLWTSTMDFVEEHPNYLNVNGAFAWLKDNSQNPKNYDYTQGYSTCHFWTNFEIVDLDFLRSEPYEKYMQYLEEKGGFYYERWGDAPVRSLALALFADKSSIHWFRDIGYHHTPYTNCPTCPADSDRCNGNCVPGKFTPWSDLDNQNCQATWIRHSMSEEELEMY.

The Cytoplasmic segment spans residues 1-11 (MRFLSKRILKP). The chain crosses the membrane as a helical; Signal-anchor for type II membrane protein span at residues 12-32 (VLSVIILISIAVTVVLYFLTA). The stem region stretch occupies residues 33–130 (NENYLQAVKD…NLVRSGDPLA (98 aa)). Residues 33 to 464 (NENYLQAVKD…SMSEEELEMY (432 aa)) lie on the Lumenal side of the membrane. A catalytic region spans residues 131–464 (GKAKGTILSL…SMSEEELEMY (334 aa)). The active-site Nucleophile is glutamate 352.

Belongs to the glycosyltransferase 15 family.

The protein localises to the membrane. Possible glycosyltransferase that transfers an alpha-D-mannosyl residue from GDP-mannose into lipid-linked oligosaccharide, forming an alpha-(1-&gt;2)-D-mannosyl-D-mannose linkage. The sequence is that of Probable mannosyltransferase KTR4 (KTR4) from Saccharomyces cerevisiae (strain ATCC 204508 / S288c) (Baker's yeast).